A 277-amino-acid polypeptide reads, in one-letter code: Shikimate dehydrogenase (NADP(+)) (277 aa).

Residues 15 to 17 and threonine 64 contribute to the shikimate site; that span reads SKS. The Proton acceptor role is filled by lysine 68. 2 residues coordinate shikimate: asparagine 89 and aspartate 104. NADP(+) contacts are provided by residues 129–133, 153–158, and methionine 217; these read GAGGA and NRTAKR. Shikimate is bound at residue tyrosine 219. Residue glycine 242 coordinates NADP(+).

It belongs to the shikimate dehydrogenase family. Homodimer.

The enzyme catalyses shikimate + NADP(+) = 3-dehydroshikimate + NADPH + H(+). Its pathway is metabolic intermediate biosynthesis; chorismate biosynthesis; chorismate from D-erythrose 4-phosphate and phosphoenolpyruvate: step 4/7. Involved in the biosynthesis of the chorismate, which leads to the biosynthesis of aromatic amino acids. Catalyzes the reversible NADPH linked reduction of 3-dehydroshikimate (DHSA) to yield shikimate (SA). This is Shikimate dehydrogenase (NADP(+)) from Hydrogenovibrio crunogenus (strain DSM 25203 / XCL-2) (Thiomicrospira crunogena).